The sequence spans 323 residues: Ribose 1,5-bisphosphate isomerase (323 aa).

Substrate is bound by residues 22–25 and Arg65; that span reads RGAA. Cys130 (proton acceptor) is an active-site residue. The active-site Proton donor is the Asp199. Residues 209–210 and Lys235 contribute to the substrate site; that span reads NK. Lys210 is covalently cross-linked (Glycyl lysine isopeptide (Lys-Gly) (interchain with G-Cter in SAMP2)).

This sequence belongs to the eIF-2B alpha/beta/delta subunits family. R15P isomerase subfamily.

The enzyme catalyses alpha-D-ribose 1,5-bisphosphate = D-ribulose 1,5-bisphosphate. Its function is as follows. Catalyzes the isomerization of ribose 1,5-bisphosphate (R15P) to ribulose 1,5-bisphosphate (RuBP), the CO(2) acceptor and substrate for RubisCO. Functions in an archaeal AMP degradation pathway, together with AMP phosphorylase and RubisCO. This is Ribose 1,5-bisphosphate isomerase from Haloferax volcanii (strain ATCC 29605 / DSM 3757 / JCM 8879 / NBRC 14742 / NCIMB 2012 / VKM B-1768 / DS2) (Halobacterium volcanii).